The following is a 180-amino-acid chain: NADH-quinone oxidoreductase subunit I (180 aa).

4Fe-4S ferredoxin-type domains lie at 50–80 (LTRD…LQKT) and 90–119 (EFFR…LTPD). Residues C60, C63, C66, C70, C99, C102, C105, and C109 each coordinate [4Fe-4S] cluster.

It belongs to the complex I 23 kDa subunit family. NDH-1 is composed of 13 different subunits. Subunits NuoA, H, J, K, L, M, N constitute the membrane sector of the complex. [4Fe-4S] cluster is required as a cofactor.

It is found in the cell inner membrane. It catalyses the reaction a quinone + NADH + 5 H(+)(in) = a quinol + NAD(+) + 4 H(+)(out). NDH-1 shuttles electrons from NADH, via FMN and iron-sulfur (Fe-S) centers, to quinones in the respiratory chain. The immediate electron acceptor for the enzyme in this species is believed to be ubiquinone. Couples the redox reaction to proton translocation (for every two electrons transferred, four hydrogen ions are translocated across the cytoplasmic membrane), and thus conserves the redox energy in a proton gradient. The sequence is that of NADH-quinone oxidoreductase subunit I from Shigella dysenteriae serotype 1 (strain Sd197).